Reading from the N-terminus, the 209-residue chain is Glutathione S-transferase F7 (209 aa).

The region spanning 2–83 is the GST N-terminal domain; sequence AGIKVFGHPA…YIAHFYSDKG (82 aa). Residues 12-13, 41-42, 54-55, and 67-68 contribute to the glutathione site; these read ST, HK, KV, and ES. Residues 90 to 209 enclose the GST C-terminal domain; that stretch reads GSKDIAGIAM…TSRPSAKKVL (120 aa).

This sequence belongs to the GST superfamily. Phi family.

It localises to the cytoplasm. The protein resides in the cytosol. It catalyses the reaction RX + glutathione = an S-substituted glutathione + a halide anion + H(+). Its function is as follows. May be involved in the conjugation of reduced glutathione to a wide number of exogenous and endogenous hydrophobic electrophiles and have a detoxification role against certain herbicides. This chain is Glutathione S-transferase F7, found in Arabidopsis thaliana (Mouse-ear cress).